The following is a 417-amino-acid chain: Serine hydroxymethyltransferase 1 (417 aa).

Residues Leu-121 and 125-127 (GHL) contribute to the (6S)-5,6,7,8-tetrahydrofolate site. At Lys-230 the chain carries N6-(pyridoxal phosphate)lysine. 355–357 (SPF) is a (6S)-5,6,7,8-tetrahydrofolate binding site.

It belongs to the SHMT family. As to quaternary structure, homodimer. It depends on pyridoxal 5'-phosphate as a cofactor.

The protein localises to the cytoplasm. It catalyses the reaction (6R)-5,10-methylene-5,6,7,8-tetrahydrofolate + glycine + H2O = (6S)-5,6,7,8-tetrahydrofolate + L-serine. It participates in one-carbon metabolism; tetrahydrofolate interconversion. Its pathway is amino-acid biosynthesis; glycine biosynthesis; glycine from L-serine: step 1/1. In terms of biological role, catalyzes the reversible interconversion of serine and glycine with tetrahydrofolate (THF) serving as the one-carbon carrier. This reaction serves as the major source of one-carbon groups required for the biosynthesis of purines, thymidylate, methionine, and other important biomolecules. Also exhibits THF-independent aldolase activity toward beta-hydroxyamino acids, producing glycine and aldehydes, via a retro-aldol mechanism. In Pseudomonas putida (strain ATCC 47054 / DSM 6125 / CFBP 8728 / NCIMB 11950 / KT2440), this protein is Serine hydroxymethyltransferase 1.